Consider the following 139-residue polypeptide: Coat protein TP2 (139 aa).

Its subcellular location is the virion. The polypeptide is Coat protein TP2 (Thermoproteus tenax virus 1 (strain KRA1) (TTV1)).